Reading from the N-terminus, the 343-residue chain is Anthranilate phosphoribosyltransferase (343 aa).

5-phospho-alpha-D-ribose 1-diphosphate contacts are provided by residues Gly-84, 87-88, Thr-92, 94-97, 112-120, and Ser-124; these read GD, NIST, and KHGNRGVSS. Position 84 (Gly-84) interacts with anthranilate. Ser-96 contributes to the Mg(2+) binding site. Asn-115 contacts anthranilate. Position 170 (Arg-170) interacts with anthranilate. Mg(2+)-binding residues include Asp-229 and Glu-230.

The protein belongs to the anthranilate phosphoribosyltransferase family. Homodimer. Mg(2+) is required as a cofactor.

It carries out the reaction N-(5-phospho-beta-D-ribosyl)anthranilate + diphosphate = 5-phospho-alpha-D-ribose 1-diphosphate + anthranilate. Its pathway is amino-acid biosynthesis; L-tryptophan biosynthesis; L-tryptophan from chorismate: step 2/5. Functionally, catalyzes the transfer of the phosphoribosyl group of 5-phosphorylribose-1-pyrophosphate (PRPP) to anthranilate to yield N-(5'-phosphoribosyl)-anthranilate (PRA). This chain is Anthranilate phosphoribosyltransferase, found in Burkholderia pseudomallei (strain 1106a).